The primary structure comprises 156 residues: Ribonuclease pancreatic (156 aa).

The signal sequence occupies residues 1–28; the sequence is MALEKSLVLLPLLVLILLVLGWVQPSLG. Over residues 33–43 the composition is skewed to basic and acidic residues; it reads AKKFQRQHMDS. The interval 33–52 is disordered; that stretch reads AKKFQRQHMDSDSSPSSNST. Substrate contacts are provided by K35 and R38. Residue H40 is the Proton acceptor of the active site. N-linked (GlcNAc...) asparagine glycans are attached at residues N50 and N62. Cystine bridges form between C54-C112, C68-C123, C86-C138, and C93-C100. Residues 69 to 73 and K94 each bind substrate; that span reads KPVNT. N104 carries an N-linked (GlcNAc...) asparagine glycan. R113 is a substrate binding site. N116 carries an N-linked (GlcNAc...) asparagine glycan. H147 acts as the Proton donor in catalysis.

Belongs to the pancreatic ribonuclease family. As to quaternary structure, monomer. Interacts with and forms tight 1:1 complexes with RNH1. Dimerization of two such complexes may occur. Interaction with RNH1 inhibits this protein.

Its subcellular location is the secreted. It catalyses the reaction an [RNA] containing cytidine + H2O = an [RNA]-3'-cytidine-3'-phosphate + a 5'-hydroxy-ribonucleotide-3'-[RNA].. It carries out the reaction an [RNA] containing uridine + H2O = an [RNA]-3'-uridine-3'-phosphate + a 5'-hydroxy-ribonucleotide-3'-[RNA].. In terms of biological role, endonuclease that catalyzes the cleavage of RNA on the 3' side of pyrimidine nucleotides. Acts on single-stranded and double-stranded RNA. This is Ribonuclease pancreatic (RNASE1) from Gorilla gorilla gorilla (Western lowland gorilla).